The primary structure comprises 1775 residues: MALSLWPLLLLLLLLLLLSFAVTLAPTGPHSLDPGLSFLKSLLSTLDQAPQGSLSRSRFFTFLANISSSFEPGRMGEGPVGEPPPLQPPALRLHDFLVTLRGSPDWEPMLGLLGDMLALLGQEQTPRDFLVHQAGVLGGLVEVLLGALVPGGPPTPTRPPCTRDGPSDCVLAADWLPSLLLLLEGTRWQALVQVQPSVDPTNATGLDGREAAPHFLQGLLGLLTPTGELGSKEALWGGLLRTVGAPLYAAFQEGLLRVTHSLQDEVFSILGQPEPDTNGQCQGGNLQQLLLWGVRHNLSWDVQALGFLSGSPPPPPALLHCLSTGVPLPRASQPSAHISPRQRRAITVEALCENHLGPAPPYSISNFSIHLLCQHTKPATPQPHPSTTAICQTAVWYAVSWAPGAQGWLQACHDQFPDEFLDAICSNLSFSALSGSNRRLVKRLCAGLLPPPTSCPEGLPPVPLTPDIFWGCFLENETLWAERLCGEASLQAVPPSNQAWVQHVCQGPTPDVTASPPCHIGPCGERCPDGGSFLVMVCANDTMYEVLVPFWPWLAGQCRISRGGNDTCFLEGLLGPLLPSLPPLGPSPLCLTPGPFLLGMLSQLPRCQSSVPALAHPTRLHYLLRLLTFLLGPGAGGAEAQGMLGRALLLSSLPDNCSFWDAFRPEGRRSVLRTIGEYLEQDEEQPTPSGFEPTVNPSSGISKMELLACFSPVLWDLLQREKSVWALQILVQAYLHMPPENLQQLVLSAEREAAQGFLTLMLQGKLQGKLQVPPSEEQALGRLTALLLQRYPRLTSQLFIDLSPLIPFLAVSDLMRFPPSLLANDSVLAAIRDYSPGMRPEQKEALAKRLLAPELFGEVPAWPQELLWAVLPLLPHLPLENFLQLSPHQIQALEDSWPAAGLGPGHARHVLRSLVNQSVQDGEEQVRRLGPLACFLSPEELQSLVPLSDPTGPVERGLLECAANGTLSPEGRVAYELLGVLRSSGGAVLSPRELRVWAPLFSQLGLRFLQELSEPQLRAMLPVLQGTSVTPAQAVLLLGRLLPRHDLSLEELCSLHLLLPGLSPQTLQAIPRRVLVGACSCLAPELSRLSACQTAALLQTFRVKDGVKNMGTTGAGPAVCIPGQPIPTTWPDCLLPLLPLKLLQLDSLALLANRRRYWELPWSEQQAQFLWKKMQVPTNLTLRNLQALGTLAGGMSCEFLQQINSMVDFLEVVHMIYQLPTRVRGSLRACIWAELQRRMAMPEPEWTTVGPELNGLDSKLLLDLPIQLMDRLSNESIMLVVELVQRAPEQLLALTPLHQAALAERALQNLAPKETPVSGEVLETLGPLVGFLGTESTRQIPLQILLSHLSQLQGFCLGETFATELGWLLLQESVLGKPELWSQDEVEQAGRLVFTLSTEAISLIPREALGPETLERLLEKQQSWEQSRVGQLCREPQLAAKKAALVAGVVRPAAEDLPEPVPNCADVRGTFPAAWSATQIAEMELSDFEDCLTLFAGDPGLGPEELRAAMGKAKQLWGPPRGFRPEQILQLGRLLIGLGDRELQELILVDWGVLSTLGQIDGWSTTQLRIVVSSFLRQSGRHVSHLDFVHLTALGYTLCGLRPEELQHISSWEFSQAALFLGTLHLQCSEEQLEVLAHLLVLPGGFGPISNWGPEIFTEIGTIAAGIPDLALSALLRGQIQGVTPLAISVIPPPKFAVVFSPIQLSSLTSAQAVAVTPEQMAFLSPEQRRAVAWAQHEGKESPEQQGRSTAWGLQDWSRPSWSLVLTISFLGHLL.

A signal peptide spans 1-22; the sequence is MALSLWPLLLLLLLLLLLSFAV. 14 N-linked (GlcNAc...) asparagine glycosylation sites follow: Asn-65, Asn-202, Asn-297, Asn-366, Asn-427, Asn-476, Asn-540, Asn-565, Asn-656, Asn-824, Asn-916, Asn-964, Asn-1179, and Asn-1274.

It belongs to the stereocilin family.

Its subcellular location is the cell surface. The protein resides in the cell projection. It localises to the kinocilium. It is found in the stereocilium. Essential to the formation of horizontal top connectors between outer hair cell stereocilia. In Homo sapiens (Human), this protein is Stereocilin (STRC).